Reading from the N-terminus, the 633-residue chain is Threonine--tRNA ligase (633 aa).

Positions Met1–Thr61 constitute a TGS domain. Positions Asp242–Pro533 are catalytic. 3 residues coordinate Zn(2+): Cys333, His384, and His510.

Belongs to the class-II aminoacyl-tRNA synthetase family. Homodimer. It depends on Zn(2+) as a cofactor.

It localises to the cytoplasm. The enzyme catalyses tRNA(Thr) + L-threonine + ATP = L-threonyl-tRNA(Thr) + AMP + diphosphate + H(+). Catalyzes the attachment of threonine to tRNA(Thr) in a two-step reaction: L-threonine is first activated by ATP to form Thr-AMP and then transferred to the acceptor end of tRNA(Thr). Also edits incorrectly charged L-seryl-tRNA(Thr). This is Threonine--tRNA ligase from Ehrlichia ruminantium (strain Welgevonden).